The sequence spans 354 residues: WASH complex subunit 3 (354 aa).

Residues 76 to 354 (SSANVPVHNT…DDDDDDDESW (279 aa)) form a disordered region. The span at 107–143 (IPPPPPPPPPPMTGVPPPPPPPPPPPISKSNIPPPPA) shows a compositional bias: pro residues. Over residues 150-159 (ESDDDDEDNN) the composition is skewed to acidic residues. The segment covering 213–244 (PQPPQPQPQSPSPQPPPPPTTTSSIPVPPPPF) has biased composition (pro residues). Over residues 251–260 (SDDDDDDDEG) the composition is skewed to acidic residues. A compositionally biased stretch (low complexity) spans 277 to 290 (NNNSNSNSYSNNNN). Composition is skewed to acidic residues over residues 293–307 (DDDDDDDDDDDDDDN) and 342–354 (DADDDDDDDDESW).

This sequence belongs to the CCDC53 family. In terms of assembly, probable component of the WASH complex.

This is WASH complex subunit 3 from Dictyostelium discoideum (Social amoeba).